A 151-amino-acid polypeptide reads, in one-letter code: Aspartate 1-decarboxylase (151 aa).

Catalysis depends on serine 26, which acts as the Schiff-base intermediate with substrate; via pyruvic acid. Serine 26 bears the Pyruvic acid (Ser) mark. A substrate-binding site is contributed by threonine 58. The active-site Proton donor is tyrosine 59. A substrate-binding site is contributed by 74-76 (GGA).

Belongs to the PanD family. Heterooctamer of four alpha and four beta subunits. Requires pyruvate as cofactor. In terms of processing, is synthesized initially as an inactive proenzyme, which is activated by self-cleavage at a specific serine bond to produce a beta-subunit with a hydroxyl group at its C-terminus and an alpha-subunit with a pyruvoyl group at its N-terminus.

Its subcellular location is the cytoplasm. The enzyme catalyses L-aspartate + H(+) = beta-alanine + CO2. Its pathway is cofactor biosynthesis; (R)-pantothenate biosynthesis; beta-alanine from L-aspartate: step 1/1. Its function is as follows. Catalyzes the pyruvoyl-dependent decarboxylation of aspartate to produce beta-alanine. The polypeptide is Aspartate 1-decarboxylase (Crocosphaera subtropica (strain ATCC 51142 / BH68) (Cyanothece sp. (strain ATCC 51142))).